Here is a 485-residue protein sequence, read N- to C-terminus: Glutamate--tRNA ligase (485 aa).

The short motif at 11 to 21 is the 'HIGH' region element; that stretch reads PSPTGYMHVGN. Zn(2+)-binding residues include Cys-108, Cys-110, Cys-135, and Asp-137. A 'KMSKS' region motif is present at residues 252-256; that stretch reads KLSKR. Lys-255 contacts ATP.

Belongs to the class-I aminoacyl-tRNA synthetase family. Glutamate--tRNA ligase type 1 subfamily. As to quaternary structure, monomer. Zn(2+) serves as cofactor.

Its subcellular location is the cytoplasm. It carries out the reaction tRNA(Glu) + L-glutamate + ATP = L-glutamyl-tRNA(Glu) + AMP + diphosphate. Catalyzes the attachment of glutamate to tRNA(Glu) in a two-step reaction: glutamate is first activated by ATP to form Glu-AMP and then transferred to the acceptor end of tRNA(Glu). The polypeptide is Glutamate--tRNA ligase (Clostridium botulinum (strain ATCC 19397 / Type A)).